The sequence spans 391 residues: Succinate--CoA ligase [ADP-forming] subunit beta (391 aa).

The ATP-grasp domain maps to 9 to 247; the sequence is KDILAKYGVA…IAEEDPLEVE (239 aa). Residues K49, 56–58, E102, A105, and E110 contribute to the ATP site; that span reads GRG. Positions 202 and 216 each coordinate Mg(2+). Residues N267 and 324–326 each bind substrate; that span reads GIL.

This sequence belongs to the succinate/malate CoA ligase beta subunit family. As to quaternary structure, heterotetramer of two alpha and two beta subunits. It depends on Mg(2+) as a cofactor.

It carries out the reaction succinate + ATP + CoA = succinyl-CoA + ADP + phosphate. The catalysed reaction is GTP + succinate + CoA = succinyl-CoA + GDP + phosphate. Its pathway is carbohydrate metabolism; tricarboxylic acid cycle; succinate from succinyl-CoA (ligase route): step 1/1. Functionally, succinyl-CoA synthetase functions in the citric acid cycle (TCA), coupling the hydrolysis of succinyl-CoA to the synthesis of either ATP or GTP and thus represents the only step of substrate-level phosphorylation in the TCA. The beta subunit provides nucleotide specificity of the enzyme and binds the substrate succinate, while the binding sites for coenzyme A and phosphate are found in the alpha subunit. This is Succinate--CoA ligase [ADP-forming] subunit beta from Acidobacterium capsulatum (strain ATCC 51196 / DSM 11244 / BCRC 80197 / JCM 7670 / NBRC 15755 / NCIMB 13165 / 161).